The chain runs to 398 residues: Organelle RRM domain-containing protein 1, chloroplastic (398 aa).

The transit peptide at 1-88 directs the protein to the chloroplast; it reads MDTALPSVLI…RWVVVMDTPP (88 aa). The span at 54 to 70 shows a compositional bias: low complexity; it reads LLASSSESPPAQLAAAS. Positions 54–79 are disordered; it reads LLASSSESPPAQLAAASTESQSRSSR. The 79-residue stretch at 299–377 folds into the RRM domain; it reads KRLFVTGLSF…WMIVVDVAKT (79 aa).

It is found in the plastid. Its subcellular location is the chloroplast. Functionally, involved in C-to-U editing of chloroplastic RNA. Functions as major chloroplastic editing factor. Controls a majority of the chloroplastic editing sites. In Zea mays (Maize), this protein is Organelle RRM domain-containing protein 1, chloroplastic (ORRM1).